Reading from the N-terminus, the 381-residue chain is Creatine kinase B-type (381 aa).

At Ser-4 the chain carries Phosphoserine. The Phosphagen kinase N-terminal domain maps to Lys-11–Gly-98. Thr-35 carries the phosphothreonine modification. Residue Lys-45 forms a Glycyl lysine isopeptide (Lys-Gly) (interchain with G-Cter in ubiquitin) linkage. Residue Val-72 participates in creatine binding. Over residues Arg-96 to Leu-110 the composition is skewed to basic and acidic residues. The segment at Arg-96–Pro-123 is disordered. Glycyl lysine isopeptide (Lys-Gly) (interchain with G-Cter in ubiquitin) cross-links involve residues Lys-101 and Lys-107. Phosphotyrosine is present on Tyr-125. The region spanning Tyr-125–Leu-367 is the Phosphagen kinase C-terminal domain. ATP-binding positions include Ser-128–Arg-132, Arg-130, Arg-132, and His-191. The interval Arg-130–Arg-138 is internal MTS-like signal. Ser-199 is modified (phosphoserine). Glu-232 contributes to the creatine binding site. Arg-236 serves as a coordination point for ATP. At Tyr-269 the chain carries 3'-nitrotyrosine. Ser-285 is a binding site for creatine. ATP contacts are provided by residues Arg-292, Arg-320, Arg-320–Val-325, and Asp-335. The residue at position 322 (Thr-322) is a Phosphothreonine. A Glycyl lysine isopeptide (Lys-Gly) (interchain with G-Cter in ubiquitin) cross-link involves residue Lys-381.

The protein belongs to the ATP:guanido phosphotransferase family. In terms of assembly, dimer of identical or non-identical chains, which can be either B (brain type) or M (muscle type). With MM being the major form in skeletal muscle and myocardium, MB existing in myocardium, and BB existing in many tissues, especially brain. Interacts with SLC12A6 (via C-terminus); the interaction may be required for SLC12A6 potassium-chloride cotransport activity. Post-translationally, ubiquitinated by the ECS(ASB9) complex, leading to its degradation by the proteasome.

The protein localises to the cytoplasm. It is found in the cytosol. The protein resides in the mitochondrion. Its subcellular location is the cell membrane. It carries out the reaction creatine + ATP = N-phosphocreatine + ADP + H(+). Its function is as follows. Reversibly catalyzes the transfer of phosphate between ATP and various phosphogens (e.g. creatine phosphate). Creatine kinase isoenzymes play a central role in energy transduction in tissues with large, fluctuating energy demands, such as skeletal muscle, heart, brain and spermatozoa. Acts as a key regulator of adaptive thermogenesis as part of the futile creatine cycle: localizes to the mitochondria of thermogenic fat cells and acts by mediating phosphorylation of creatine to initiate a futile cycle of creatine phosphorylation and dephosphorylation. During the futile creatine cycle, creatine and N-phosphocreatine are in a futile cycle, which dissipates the high energy charge of N-phosphocreatine as heat without performing any mechanical or chemical work. In Canis lupus familiaris (Dog), this protein is Creatine kinase B-type (CKB).